A 141-amino-acid chain; its full sequence is Holo-[acyl-carrier-protein] synthase (141 aa).

Positions 8 and 63 each coordinate Mg(2+).

It belongs to the P-Pant transferase superfamily. AcpS family. It depends on Mg(2+) as a cofactor.

Its subcellular location is the cytoplasm. The enzyme catalyses apo-[ACP] + CoA = holo-[ACP] + adenosine 3',5'-bisphosphate + H(+). Transfers the 4'-phosphopantetheine moiety from coenzyme A to a Ser of acyl-carrier-protein. The polypeptide is Holo-[acyl-carrier-protein] synthase (Rhodospirillum centenum (strain ATCC 51521 / SW)).